A 373-amino-acid chain; its full sequence is DNA replication and repair protein RecF (373 aa).

30-37 (GPNGQGKT) is a binding site for ATP.

This sequence belongs to the RecF family.

It is found in the cytoplasm. Functionally, the RecF protein is involved in DNA metabolism; it is required for DNA replication and normal SOS inducibility. RecF binds preferentially to single-stranded, linear DNA. It also seems to bind ATP. The polypeptide is DNA replication and repair protein RecF (Streptomyces avermitilis (strain ATCC 31267 / DSM 46492 / JCM 5070 / NBRC 14893 / NCIMB 12804 / NRRL 8165 / MA-4680)).